Consider the following 444-residue polypeptide: Type VI secretion system baseplate component TssK1 (444 aa).

As to quaternary structure, forms transient higher-order structures that correlated with dynamics of sheath component TssB1. Interacts with TssA1.

In terms of biological role, core component of the H1 type VI (H1-T6SS) secretion system that plays a role in the release of toxins targeting both eukaryotic and prokaryotic species. Functions as a spatio-temporal marker for assembly of contractile apparatus made of TssB1 and TssC1. This role in assembly depends on TssM1. The protein is Type VI secretion system baseplate component TssK1 of Pseudomonas aeruginosa (strain ATCC 15692 / DSM 22644 / CIP 104116 / JCM 14847 / LMG 12228 / 1C / PRS 101 / PAO1).